Here is a 429-residue protein sequence, read N- to C-terminus: Nicotinate phosphoribosyltransferase (429 aa).

3 residues coordinate nicotinate: tyrosine 15, phenylalanine 177, and threonine 229. A Phosphohistidine; by autocatalysis modification is found at histidine 232. Position 294 (arginine 294) interacts with nicotinate. Threonine 355 is a 5-phospho-alpha-D-ribose 1-diphosphate binding site.

Belongs to the NAPRTase family. Transiently phosphorylated on a His residue during the reaction cycle. Phosphorylation strongly increases the affinity for substrates and increases the rate of nicotinate D-ribonucleotide production. Dephosphorylation regenerates the low-affinity form of the enzyme, leading to product release.

It localises to the cytoplasm. Its subcellular location is the nucleus. The catalysed reaction is nicotinate + 5-phospho-alpha-D-ribose 1-diphosphate + ATP + H2O = nicotinate beta-D-ribonucleotide + ADP + phosphate + diphosphate. Its pathway is cofactor biosynthesis; NAD(+) biosynthesis; nicotinate D-ribonucleotide from nicotinate: step 1/1. Functionally, catalyzes the first step in the biosynthesis of NAD from nicotinic acid, the ATP-dependent synthesis of beta-nicotinate D-ribonucleotide from nicotinate and 5-phospho-D-ribose 1-phosphate. Essential for growth under anaerobic conditions. This is Nicotinate phosphoribosyltransferase (NPT1) from Saccharomyces cerevisiae (strain ATCC 204508 / S288c) (Baker's yeast).